Reading from the N-terminus, the 324-residue chain is Methionyl-tRNA formyltransferase (324 aa).

Residue 109 to 112 (SILP) participates in (6S)-5,6,7,8-tetrahydrofolate binding.

This sequence belongs to the Fmt family.

The enzyme catalyses L-methionyl-tRNA(fMet) + (6R)-10-formyltetrahydrofolate = N-formyl-L-methionyl-tRNA(fMet) + (6S)-5,6,7,8-tetrahydrofolate + H(+). Its function is as follows. Attaches a formyl group to the free amino group of methionyl-tRNA(fMet). The formyl group appears to play a dual role in the initiator identity of N-formylmethionyl-tRNA by promoting its recognition by IF2 and preventing the misappropriation of this tRNA by the elongation apparatus. The protein is Methionyl-tRNA formyltransferase of Acidothermus cellulolyticus (strain ATCC 43068 / DSM 8971 / 11B).